The sequence spans 212 residues: Leucine efflux protein (212 aa).

Transmembrane regions (helical) follow at residues 12-32, 49-69, 71-91, 122-142, 153-173, and 188-208; these read TYLVGAIFIVLVPGPNTLFVL, GVFIGDAVLMFLAWAGVATLI, TTPILFNIVRYLGAFYLLYLG, ILSLTNPKAILFYVSFFVQFI, FFILAATLELVSFCYLSFLII, and LAKVGNSLIGLMFVGFAARLA.

The protein belongs to the Rht family.

Its subcellular location is the cell inner membrane. It carries out the reaction L-leucine(in) + H(+)(out) = L-leucine(out) + H(+)(in). Its activity is regulated as follows. Leucine export is inhibited by the proton ionophore carbonyl cyanide m-chlorophenylhydrazone (CCCP). Its function is as follows. Exporter of leucine. Can also transport its natural analog L-alpha-amino-n-butyric acid and some other structurally unrelated amino acids. Leucine excretion is probably driven by proton motive force. This Escherichia coli (strain K12) protein is Leucine efflux protein.